We begin with the raw amino-acid sequence, 83 residues long: MQWLAFVAPRWRCVCDQELSAQTGHVTDDVGVSTPAKEGIMQGNGARCDVGFPPCKDNKCYCCIGGRTHARYSTLAECSHACF.

The signal sequence occupies residues 1–22; that stretch reads MQWLAFVAPRWRCVCDQELSAQ. A disulfide bond links Cys-60 and Cys-82.

The protein belongs to the MEG family. Expressed in endosperm, anther and pollen.

In Zea mays (Maize), this protein is Protein MATERNALLY EXPRESSED GENE 3 (MEG3).